The primary structure comprises 287 residues: Proline iminopeptidase (287 aa).

In terms of domain architecture, AB hydrolase-1 spans 22–271; sequence PLVLLHGGPG…RSRHMAFIDE (250 aa). The active-site Nucleophile is S98. D238 is an active-site residue. The active-site Proton donor is H265.

This sequence belongs to the peptidase S33 family.

The protein localises to the cell envelope. It carries out the reaction Release of N-terminal proline from a peptide.. Releases the N-terminal proline from various substrates. This Lactiplantibacillus plantarum (strain ATCC BAA-793 / NCIMB 8826 / WCFS1) (Lactobacillus plantarum) protein is Proline iminopeptidase.